The primary structure comprises 797 residues: Protocadherin beta-11 (797 aa).

Residues 1 to 26 (MENQGTRTQQIRQVLLLFVLLGMSQA) form the signal peptide. The Extracellular portion of the chain corresponds to 27-690 (GSETWSFSVA…AQADSLTVYL (664 aa)). 5 Cadherin domains span residues 35–133 (VAEE…SPIF), 138–242 (MLLE…SPEF), 247–347 (YEVK…APEI), 352–451 (ITSP…APTF), and 456–561 (YTLF…SPFV). Asparagine 418, asparagine 436, asparagine 487, and asparagine 567 each carry an N-linked (GlcNAc...) asparagine glycan. A Cadherin 6 domain is found at 568–671 (GSAPCTELVP…LVDGFSQPYL (104 aa)). Residues 691–711 (VVALASVSSLFLFSVLLFVAV) form a helical membrane-spanning segment. Residues 712-797 (RLCRRSRAAS…TFRNSFGFNF (86 aa)) are Cytoplasmic-facing.

The protein resides in the cell membrane. Its function is as follows. Potential calcium-dependent cell-adhesion protein. May be involved in the establishment and maintenance of specific neuronal connections in the brain. The polypeptide is Protocadherin beta-11 (PCDHB11) (Homo sapiens (Human)).